The chain runs to 492 residues: 3-octaprenyl-4-hydroxybenzoate carboxy-lyase (492 aa).

Position 172 (Asn-172) interacts with Mn(2+). Prenylated FMN contacts are provided by residues 175–177 (IYR), 189–191 (RWL), and 194–195 (RG). Glu-238 lines the Mn(2+) pocket. Catalysis depends on Asp-287, which acts as the Proton donor.

It belongs to the UbiD family. In terms of assembly, homohexamer. Requires prenylated FMN as cofactor. It depends on Mn(2+) as a cofactor.

It is found in the cell membrane. It catalyses the reaction a 4-hydroxy-3-(all-trans-polyprenyl)benzoate + H(+) = a 2-(all-trans-polyprenyl)phenol + CO2. It participates in cofactor biosynthesis; ubiquinone biosynthesis. Catalyzes the decarboxylation of 3-octaprenyl-4-hydroxy benzoate to 2-octaprenylphenol, an intermediate step in ubiquinone biosynthesis. In Pasteurella multocida (strain Pm70), this protein is 3-octaprenyl-4-hydroxybenzoate carboxy-lyase.